Consider the following 469-residue polypeptide: Probable Xaa-Pro aminopeptidase AN0832 (469 aa).

4 residues coordinate Mn(2+): aspartate 260, aspartate 271, glutamate 398, and glutamate 437.

It belongs to the peptidase M24B family. The cofactor is Mn(2+).

The catalysed reaction is Release of any N-terminal amino acid, including proline, that is linked to proline, even from a dipeptide or tripeptide.. Catalyzes the removal of a penultimate prolyl residue from the N-termini of peptides. This Emericella nidulans (strain FGSC A4 / ATCC 38163 / CBS 112.46 / NRRL 194 / M139) (Aspergillus nidulans) protein is Probable Xaa-Pro aminopeptidase AN0832.